Reading from the N-terminus, the 255-residue chain is Hydroxyacylglutathione hydrolase (255 aa).

His-56, His-58, Asp-60, His-61, His-114, Asp-133, and His-171 together coordinate Zn(2+).

Belongs to the metallo-beta-lactamase superfamily. Glyoxalase II family. In terms of assembly, monomer. Zn(2+) serves as cofactor.

The enzyme catalyses an S-(2-hydroxyacyl)glutathione + H2O = a 2-hydroxy carboxylate + glutathione + H(+). It functions in the pathway secondary metabolite metabolism; methylglyoxal degradation; (R)-lactate from methylglyoxal: step 2/2. Its function is as follows. Thiolesterase that catalyzes the hydrolysis of S-D-lactoyl-glutathione to form glutathione and D-lactic acid. The sequence is that of Hydroxyacylglutathione hydrolase from Fuscovulum blasticum (Rhodobacter blasticus).